Reading from the N-terminus, the 278-residue chain is Envelope glycoprotein L (278 aa).

Positions 1–30 (MCRRPDCGFSFSPGPVILLWCCLLLPIVSS) are cleaved as a signal peptide. The 214-residue stretch at 43-256 (VPAECPELTR…DKYYAGLPPE (214 aa)) folds into the gL betaherpesvirus-type domain. Cysteine 154 and cysteine 159 are disulfide-bonded.

It belongs to the herpesviridae glycoprotein L (gL) family. Betaherpesvirinae gL subfamily. In terms of assembly, interacts with glycoprotein H (gH); this interaction is necessary for the correct processing and cell surface expression of gH. Forms the envelope pentamer complex (PC) composed of gH, gL, UL128, UL130, and UL131A. The pentamer interacts with host NRP2. Forms the envelope trimer complex composed of gH, gL, and gO. The trimer interacts with host PDGFRA. The trimer also interacts with host EPHA2.

It is found in the virion membrane. The protein localises to the host cell membrane. It localises to the host Golgi apparatus. Its subcellular location is the host trans-Golgi network. Its function is as follows. The heterodimer glycoprotein H-glycoprotein L is required for the fusion of viral and plasma membranes leading to virus entry into the host cell. Acts as a functional inhibitor of gH and maintains gH in an inhibited form. Upon binding to host integrins, gL dissociates from gH leading to activation of the viral fusion glycoproteins gB and gH. In human cytomegalovirus, forms two distincts complexes to mediate viral entry, a trimer and a pentamer at the surface of the virion envelope. The gH-gL-gO trimer is required for infection in fibroblasts by interacting with host PDGFRA, and in glioblastoma cells by interacting with host EPHA2. The gH-gL-UL128-UL130-UL131A pentamer is essential for viral entry in epithelial, endothelial and myeloid cells via interaction with host NRP2. The polypeptide is Envelope glycoprotein L (Homo sapiens (Human)).